The following is a 265-amino-acid chain: Speedy protein E12 (265 aa).

The segment at 1-80 (MGQILGKIMM…EPEKELAPEP (80 aa)) is disordered. Positions 13–23 (QPQPQEEQSPQ) are enriched in low complexity. Residues 66–80 (DESDDEPEKELAPEP) are compositionally biased toward acidic residues.

The protein belongs to the Speedy/Ringo family.

The sequence is that of Speedy protein E12 from Homo sapiens (Human).